We begin with the raw amino-acid sequence, 270 residues long: UBX domain-containing protein 8 (270 aa).

A topological domain (cytoplasmic) is located at residue Met-1. The helical transmembrane segment at 2–22 threads the bilayer; sequence ASRGVVGIFFLSAVPLVCLEL. Residues 23 to 33 are Lumenal-facing; the sequence is RRGIPDIGIKD. A helical membrane pass occupies residues 34–54; sequence FLLLCGRILLLLALLTLIISV. Residues 55-270 are Cytoplasmic-facing; sequence TTSWLNSFKS…LILEEKEQTN (216 aa). Residues 130–171 form a disordered region; that stretch reads SGHKLGGDEGTSQTSFETSNREAAKSQNLPKPLTEFPSPAEQ. The residue at position 167 (Ser-167) is a Phosphoserine. The UBX domain occupies 187-263; it reads TAEEVVTVAL…GITVDTVLIL (77 aa).

Interacts with SYVN1 and VCP. Expressed abundantly in ovary and testis, and weakly in all other tissues tested.

It is found in the endoplasmic reticulum membrane. In terms of biological role, involved in endoplasmic reticulum-associated degradation (ERAD) for misfolded lumenal proteins, possibly by tethering VCP to the endoplasmic reticulum membrane. May play a role in reproduction. The chain is UBX domain-containing protein 8 (UBXN8) from Homo sapiens (Human).